We begin with the raw amino-acid sequence, 512 residues long: Histidine ammonia-lyase (512 aa).

The 5-imidazolinone (Ala-Gly) cross-link spans Ala142 to Gly144. A 2,3-didehydroalanine (Ser) modification is found at Ser143.

This sequence belongs to the PAL/histidase family. In terms of processing, contains an active site 4-methylidene-imidazol-5-one (MIO), which is formed autocatalytically by cyclization and dehydration of residues Ala-Ser-Gly.

Its subcellular location is the cytoplasm. It catalyses the reaction L-histidine = trans-urocanate + NH4(+). Its pathway is amino-acid degradation; L-histidine degradation into L-glutamate; N-formimidoyl-L-glutamate from L-histidine: step 1/3. The chain is Histidine ammonia-lyase from Bartonella henselae (strain ATCC 49882 / DSM 28221 / CCUG 30454 / Houston 1) (Rochalimaea henselae).